Consider the following 293-residue polypeptide: Undecaprenyl-diphosphatase (293 aa).

7 helical membrane-spanning segments follow: residues 3–23, 43–63, 85–105, 109–129, 203–223, 238–258, and 269–289; these read IALAIKALILGIVEGLTEFLP, KGKIFEIVIQFGAILAVCWEF, LNVIVATIPAITLALIFGKAI, LFNPIVVASAFIIGGLVILWA, VATEFSFFLAIPVIFGATVYE, IFGIGFVAAFISAFFCVRWLL, and FAWYRIVFGVIVLVTAYTHLI.

Belongs to the UppP family.

It localises to the cell inner membrane. It carries out the reaction di-trans,octa-cis-undecaprenyl diphosphate + H2O = di-trans,octa-cis-undecaprenyl phosphate + phosphate + H(+). Its function is as follows. Catalyzes the dephosphorylation of undecaprenyl diphosphate (UPP). Confers resistance to bacitracin. This is Undecaprenyl-diphosphatase from Ralstonia nicotianae (strain ATCC BAA-1114 / GMI1000) (Ralstonia solanacearum).